Here is a 516-residue protein sequence, read N- to C-terminus: tRNA-2-methylthio-N(6)-dimethylallyladenosine synthase (516 aa).

Positions 17-133 constitute an MTTase N-terminal domain; the sequence is RSFEVRTFGC…LPSLLSRSEH (117 aa). The [4Fe-4S] cluster site is built by C26, C62, C96, C170, C174, and C177. The Radical SAM core domain maps to 156-392; sequence RESAYAGWVS…LALQERISTE (237 aa). The TRAM domain maps to 395 to 466; the sequence is AKLIGTEVEL…PFFLIADSGV (72 aa). Disordered stretches follow at residues 409 to 438 and 492 to 516; these read SGGR…QGHV and GLGL…GCGC. The segment covering 412–438 has biased composition (basic and acidic residues); that stretch reads RKNDKTQRMTGRSRDGRLVHFDPQGHV.

This sequence belongs to the methylthiotransferase family. MiaB subfamily. In terms of assembly, monomer. [4Fe-4S] cluster serves as cofactor.

It localises to the cytoplasm. The enzyme catalyses N(6)-dimethylallyladenosine(37) in tRNA + (sulfur carrier)-SH + AH2 + 2 S-adenosyl-L-methionine = 2-methylsulfanyl-N(6)-dimethylallyladenosine(37) in tRNA + (sulfur carrier)-H + 5'-deoxyadenosine + L-methionine + A + S-adenosyl-L-homocysteine + 2 H(+). Catalyzes the methylthiolation of N6-(dimethylallyl)adenosine (i(6)A), leading to the formation of 2-methylthio-N6-(dimethylallyl)adenosine (ms(2)i(6)A) at position 37 in tRNAs that read codons beginning with uridine. The sequence is that of tRNA-2-methylthio-N(6)-dimethylallyladenosine synthase from Corynebacterium diphtheriae (strain ATCC 700971 / NCTC 13129 / Biotype gravis).